The primary structure comprises 134 residues: Small ribosomal subunit protein uS12 (134 aa).

The tract at residues 1 to 30 is disordered; it reads MPTINQLVKHGREKVKEKSKSPALQGHPQK. The residue at position 89 (aspartate 89) is a 3-methylthioaspartic acid. Residues 106 to 134 are disordered; sequence GVENRRQSRSKYGAKRPKAGAAAGAKGKK. A compositionally biased stretch (basic residues) spans 112-123; that stretch reads QSRSKYGAKRPK. The span at 124 to 134 shows a compositional bias: low complexity; it reads AGAAAGAKGKK.

The protein belongs to the universal ribosomal protein uS12 family. Part of the 30S ribosomal subunit. Contacts proteins S8 and S17. May interact with IF1 in the 30S initiation complex.

Its function is as follows. With S4 and S5 plays an important role in translational accuracy. In terms of biological role, interacts with and stabilizes bases of the 16S rRNA that are involved in tRNA selection in the A site and with the mRNA backbone. Located at the interface of the 30S and 50S subunits, it traverses the body of the 30S subunit contacting proteins on the other side and probably holding the rRNA structure together. The combined cluster of proteins S8, S12 and S17 appears to hold together the shoulder and platform of the 30S subunit. The polypeptide is Small ribosomal subunit protein uS12 (Fervidobacterium nodosum (strain ATCC 35602 / DSM 5306 / Rt17-B1)).